A 194-amino-acid chain; its full sequence is WASH complex subunit 3 (194 aa).

Met-1 carries the N-acetylmethionine modification. Positions 46–74 form a coiled coil; sequence AVCEEKLADLSLRIQQIETTLNILDAKLS. 2 disordered regions span residues 94-126 and 158-194; these read VTNGSHSETTSEQTQQNSTQDSGAQESEAPSEN and SEGLDPELLEKPDAPVPNGESERAVEESSDSDSSFSD. Low complexity predominate over residues 98-113; that stretch reads SHSETTSEQTQQNSTQ. The segment covering 114-126 has biased composition (polar residues); the sequence is DSGAQESEAPSEN.

Belongs to the CCDC53 family. As to quaternary structure, component of the WASH core complex also described as WASH regulatory complex (SHRC) composed of WASHC1, WASHC2, WASHC3, WASHC4 and WASHC5. The WASH core complex associates via WASHC2 with the F-actin-capping protein dimer (formed by CAPZA1, CAPZA2 or CAPZA3 and CAPZB) in a transient or substoichiometric manner which was initially described as WASH complex.

The protein localises to the early endosome. Acts as a component of the WASH core complex that functions as a nucleation-promoting factor (NPF) at the surface of endosomes, where it recruits and activates the Arp2/3 complex to induce actin polymerization, playing a key role in the fission of tubules that serve as transport intermediates during endosome sortingg. The chain is WASH complex subunit 3 from Mus musculus (Mouse).